Reading from the N-terminus, the 453-residue chain is Exodeoxyribonuclease 7 large subunit (453 aa).

Belongs to the XseA family. As to quaternary structure, heterooligomer composed of large and small subunits.

The protein resides in the cytoplasm. It catalyses the reaction Exonucleolytic cleavage in either 5'- to 3'- or 3'- to 5'-direction to yield nucleoside 5'-phosphates.. Functionally, bidirectionally degrades single-stranded DNA into large acid-insoluble oligonucleotides, which are then degraded further into small acid-soluble oligonucleotides. This is Exodeoxyribonuclease 7 large subunit from Geobacter metallireducens (strain ATCC 53774 / DSM 7210 / GS-15).